A 590-amino-acid chain; its full sequence is L-asparaginase (590 aa).

The 352-residue stretch at A6–N357 folds into the Asparaginase/glutaminase domain. Residue T16 is the O-isoaspartyl threonine intermediate of the active site. The interval N44–K351 is asparaginase. Substrate is bound by residues D85 to S87 and T117 to D118. 4 ANK repeats span residues I398–V427, N431–L460, R497–Q526, and N530–K559.

This sequence in the N-terminal section; belongs to the asparaginase 1 family. May be present in the larval cuticle.

The enzyme catalyses L-asparagine + H2O = L-aspartate + NH4(+). The polypeptide is L-asparaginase (Dirofilaria immitis (Canine heartworm)).